A 78-amino-acid chain; its full sequence is uncharacterized protein (78 aa).

The disordered stretch occupies residues methionine 1–glutamine 28.

This is an uncharacterized protein from Arabidopsis thaliana (Mouse-ear cress).